The chain runs to 712 residues: Secretin OutD (712 aa).

An N-terminal signal peptide occupies residues 1–27 (MLGKGIKKSWGWLGLTVLLLGSPCGWA). The interval 28 to 124 (AEFSASFKGT…LANNEQPGVG (97 aa)) is N0. The N1 stretch occupies residues 126-190 (ELVTRVVPLN…DIVNTVDKTG (65 aa)). The N2 stretch occupies residues 191–264 (DREMITVSLN…MIRQLDRKQV (74 aa)). An N3 region spans residues 267–394 (GGTKVIYLKY…DLEQVINQLD (128 aa)). The interval 288-342 (GNGTSGNRNSSSTNSSRPSSTRSSSTLNNSNSSSSGSSSGSGSSSSSSSSSMGFG) is disordered. Positions 399 to 651 (QVLVEAIIAE…LFLRPTIIRD (253 aa)) are secretin. The s domain stretch occupies residues 653–712 (QQYQQASISKYNSFNNEQQQQRGQGNSVLDNNTLRLSGGNTYTFRQVQSSISAFYQPEGR).

It belongs to the bacterial secretin family. GSP D subfamily. Forms a cylindrical channel with 15 subunits.

The protein resides in the cell outer membrane. In terms of biological role, involved in a type II secretion system (T2SS, formerly general secretion pathway, GSP) for the export of proteins. Required for the translocation of the multiple pectic enzymes. This subunit forms the outer membrane channel. The sequence is that of Secretin OutD (outD) from Dickeya chrysanthemi (Pectobacterium chrysanthemi).